The chain runs to 264 residues: Thiazole synthase (264 aa).

Lys-106 functions as the Schiff-base intermediate with DXP in the catalytic mechanism. 1-deoxy-D-xylulose 5-phosphate contacts are provided by residues Gly-167, 193 to 194 (AG), and 215 to 216 (NS).

It belongs to the ThiG family. Homotetramer. Forms heterodimers with either ThiH or ThiS.

It is found in the cytoplasm. The catalysed reaction is [ThiS sulfur-carrier protein]-C-terminal-Gly-aminoethanethioate + 2-iminoacetate + 1-deoxy-D-xylulose 5-phosphate = [ThiS sulfur-carrier protein]-C-terminal Gly-Gly + 2-[(2R,5Z)-2-carboxy-4-methylthiazol-5(2H)-ylidene]ethyl phosphate + 2 H2O + H(+). It functions in the pathway cofactor biosynthesis; thiamine diphosphate biosynthesis. Its function is as follows. Catalyzes the rearrangement of 1-deoxy-D-xylulose 5-phosphate (DXP) to produce the thiazole phosphate moiety of thiamine. Sulfur is provided by the thiocarboxylate moiety of the carrier protein ThiS. In vitro, sulfur can be provided by H(2)S. This is Thiazole synthase from Prochlorococcus marinus (strain MIT 9215).